Consider the following 211-residue polypeptide: Dual specificity protein phosphatase 26 (211 aa).

A Tyrosine-protein phosphatase domain is found at 60-207 (NHADEVWPGL…LLALDRRLRQ (148 aa)). C152 (phosphocysteine intermediate) is an active-site residue.

The protein belongs to the protein-tyrosine phosphatase family. Non-receptor class dual specificity subfamily. In terms of assembly, interacts with HSF4.

The protein resides in the cytoplasm. The protein localises to the nucleus. Its subcellular location is the golgi apparatus. The catalysed reaction is O-phospho-L-tyrosyl-[protein] + H2O = L-tyrosyl-[protein] + phosphate. It catalyses the reaction O-phospho-L-seryl-[protein] + H2O = L-seryl-[protein] + phosphate. It carries out the reaction O-phospho-L-threonyl-[protein] + H2O = L-threonyl-[protein] + phosphate. Functionally, inactivates MAPK1 and MAPK3 which leads to dephosphorylation of heat shock factor protein 4 and a reduction in its DNA-binding activity. This is Dual specificity protein phosphatase 26 (DUSP26) from Pongo abelii (Sumatran orangutan).